The primary structure comprises 72 residues: Large ribosomal subunit protein bL31 (72 aa).

Residues C16, C18, C37, and C40 each contribute to the Zn(2+) site.

It belongs to the bacterial ribosomal protein bL31 family. Type A subfamily. Part of the 50S ribosomal subunit. The cofactor is Zn(2+).

Binds the 23S rRNA. The sequence is that of Large ribosomal subunit protein bL31 from Buchnera aphidicola subsp. Schizaphis graminum (strain Sg).